Consider the following 375-residue polypeptide: Neuropeptide Y receptor type 4 (375 aa).

Over 1-39 (MNTSHLMASLSPAFLQGKNGTNPLDSLYNLSDGCQDSAD) the chain is Extracellular. Residues N2, N19, and N29 are each glycosylated (N-linked (GlcNAc...) asparagine). The chain crosses the membrane as a helical span at residues 40-60 (LLAFIITTYSVETVLGVLGNL). Residues 61-78 (CLIFVTTRQKEKSNVTNL) are Cytoplasmic-facing. Residues 79–99 (LIANLAFSDFLMCLICQPLTV) traverse the membrane as a helical segment. The Extracellular portion of the chain corresponds to 100–116 (TYTIMDYWIFGEVLCKM). C114 and C201 are joined by a disulfide. A helical transmembrane segment spans residues 117-137 (LTFIQCMSVTVSILSLVLVAL). At 138–155 (ERHQLIINPTGWKPSISQ) the chain is on the cytoplasmic side. A helical membrane pass occupies residues 156-176 (AYLGIVVIWFISCFLSLPFLA). At 177–211 (NSILNDLFHYNHSKVVEFLEDKVVCFVSWSSDHHR) the chain is on the extracellular side. Residue N187 is glycosylated (N-linked (GlcNAc...) asparagine). A helical transmembrane segment spans residues 212–232 (LIYTTFLLLFQYCVPLAFILV). Residues 233–262 (CYMRIYQRLQRQRRAFHTHTCSSRVGQMKR) are Cytoplasmic-facing. A helical membrane pass occupies residues 263 to 283 (INGMLMAMVTAFAVLWLPLHV). Residues 284–301 (FNTLEDWYQEAIPACHGN) are Extracellular-facing. Residues 302-322 (LIFLMCHLFAMASTCVNPFIY) form a helical membrane-spanning segment. Residues 323-375 (GFLNINFKKDIKALVLTCRCRPPQGEPEPLPLSTVHTDLSKGSMRMGSKSNVM) lie on the Cytoplasmic side of the membrane. C340 carries S-palmitoyl cysteine lipidation.

It belongs to the G-protein coupled receptor 1 family. Detected in colon and brain.

Its subcellular location is the cell membrane. Functionally, g protein-coupled receptor for PPY/pancreatic polypeptide/PP that is negatively coupled to cAMP. Has much lower affinity for the NPY/neuropeptide Y and PYY/peptide YY. The protein is Neuropeptide Y receptor type 4 (Npy4r) of Rattus norvegicus (Rat).